A 359-amino-acid polypeptide reads, in one-letter code: Histidinol-phosphate aminotransferase (359 aa).

An N6-(pyridoxal phosphate)lysine modification is found at K217.

This sequence belongs to the class-II pyridoxal-phosphate-dependent aminotransferase family. Histidinol-phosphate aminotransferase subfamily. In terms of assembly, homodimer. It depends on pyridoxal 5'-phosphate as a cofactor.

It carries out the reaction L-histidinol phosphate + 2-oxoglutarate = 3-(imidazol-4-yl)-2-oxopropyl phosphate + L-glutamate. It functions in the pathway amino-acid biosynthesis; L-histidine biosynthesis; L-histidine from 5-phospho-alpha-D-ribose 1-diphosphate: step 7/9. The chain is Histidinol-phosphate aminotransferase from Salmonella arizonae (strain ATCC BAA-731 / CDC346-86 / RSK2980).